The following is a 351-amino-acid chain: Cysteine-rich receptor-like protein kinase 45 (351 aa).

In terms of domain architecture, Protein kinase spans 37–287 (NDFSELVGRG…EILRYIHIAL (251 aa)). Residues 43–51 (VGRGGFGFV) and Lys-65 contribute to the ATP site. A Phosphotyrosine modification is found at Tyr-110. Asp-162 (proton acceptor) is an active-site residue. Residues Thr-197 and Thr-202 each carry the phosphothreonine modification. At Tyr-210 the chain carries Phosphotyrosine.

Belongs to the protein kinase superfamily. Ser/Thr protein kinase family. CRK subfamily. Interacts with CRK36. In terms of processing, autophosphorylated and phosphorylated by CRK36.

Its subcellular location is the cytoplasm. The protein localises to the cytosol. The enzyme catalyses L-seryl-[protein] + ATP = O-phospho-L-seryl-[protein] + ADP + H(+). The catalysed reaction is L-threonyl-[protein] + ATP = O-phospho-L-threonyl-[protein] + ADP + H(+). Its function is as follows. Forms a complex with CRK36 that may negatively control abscisic acid (ABA) and osmotic stress signal transduction. Involved in plant response to ABA during seed germination, early seedling growth and responses to abiotic stresses by inducing the expression of ABA-responsive genes and stress-inducible genes. Acts as a positive regulator in disease resistance, downstream of NPR1 and WRKY70. The chain is Cysteine-rich receptor-like protein kinase 45 from Arabidopsis thaliana (Mouse-ear cress).